The sequence spans 467 residues: Uronate isomerase (467 aa).

This sequence belongs to the metallo-dependent hydrolases superfamily. Uronate isomerase family.

The enzyme catalyses D-glucuronate = D-fructuronate. It carries out the reaction aldehydo-D-galacturonate = keto-D-tagaturonate. It participates in carbohydrate metabolism; pentose and glucuronate interconversion. This is Uronate isomerase from Haemophilus influenzae (strain 86-028NP).